Reading from the N-terminus, the 247-residue chain is SPX domain-containing protein 5 (247 aa).

The 139-residue stretch at 1–139 (MKFGKRLKRQ…GGVLRLPVIA (139 aa)) folds into the SPX domain. Residues 224–247 (SDWLIQSVQPPPPPPPSSPLIIPT) are disordered. Pro residues predominate over residues 232 to 241 (QPPPPPPPSS).

This chain is SPX domain-containing protein 5 (SPX5), found in Oryza sativa subsp. indica (Rice).